A 942-amino-acid chain; its full sequence is Homeobox protein 2 (942 aa).

Composition is skewed to low complexity over residues 32 to 87 (ECNE…NINE) and 98 to 130 (SPYS…SPIP). 4 disordered regions span residues 32-149 (ECNE…PQNI), 161-494 (LESP…RLKK), 537-580 (RQEK…QGGA), and 609-942 (FKNN…CQQN). A compositionally biased stretch (polar residues) spans 131–149 (NTNFKQSGEYQSIPSPQNI). The segment covering 163–261 (SPNSSNSSPS…PSSNLSKSNS (99 aa)) has biased composition (low complexity). Positions 269-290 (QAPSNTSSPQLLSPNHNQQRIS) are enriched in polar residues. 2 stretches are compositionally biased toward low complexity: residues 299-430 (NNNH…NSSP) and 450-464 (NNNN…SNSS). Polar residues predominate over residues 465 to 481 (FDEYQPQQKVSRSNSPN). The homeobox DNA-binding region spans 485 to 544 (EKKRRTRLKKEQADILKTFFDNDDYPTKDDKETLANRLGMSYCAVTTWFSNKRQEKKRRG). Low complexity-rich tracts occupy residues 609–621 (FKNN…NKNV), 628–685 (NNNN…GSSD), 694–737 (NNNN…NNNN), 752–764 (NNNN…NNNN), 776–864 (SDDT…YLNN), and 890–927 (NNFN…NDNN). Positions 835–865 (NNNNNNNNQNNNNNNNNNQYNNNNKNYLNNI) form a coiled coil.

Its subcellular location is the nucleus. Functionally, putative transcription factor that may potentiate the function of warA. The protein is Homeobox protein 2 (hbx2) of Dictyostelium discoideum (Social amoeba).